The following is a 523-amino-acid chain: Signal peptide peptidase-like 2A (523 aa).

A signal peptide spans 1-25 (MGLLHSLHAPAAALLWSCLLGLAAA). The Lumenal segment spans residues 26-175 (QEAILHASTN…PSWPNFDYTL (150 aa)). 6 N-linked (GlcNAc...) asparagine glycosylation sites follow: Asn-51, Asn-61, Asn-69, Asn-119, Asn-129, and Asn-135. Residues 70-155 (LTGTALCHLS…KDFKDMKETL (86 aa)) form the PA domain. The chain crosses the membrane as a helical span at residues 176–196 (VVIFVIAVFTVALGGYWSGLI). The Cytoplasmic segment spans residues 197–224 (ELENMKSVEDAEDRETRKKKDDYLTFSP). A helical transmembrane segment spans residues 225–245 (LTVVVFVVICCIMIVLLYFFY). Residues 246–247 (RW) are Lumenal-facing. The helical transmembrane segment at 248–268 (LVYVMIAIFCIASSMSLYNCL) threads the bilayer. Topologically, residues 269–288 (SALIHRMPCGQCTILCCGKN) are cytoplasmic. The helical transmembrane segment at 289–309 (IKVSLIFLSGLCISVAVVWAV) threads the bilayer. Over 310–315 (FRNEDR) the chain is Lumenal. A helical membrane pass occupies residues 316–336 (WAWILQDILGIAFCLNLIKTM). Topologically, residues 337 to 344 (KLPNFMSC) are cytoplasmic. The helical transmembrane segment at 345-365 (VILLGLLLIYDVFFVFITPFI) threads the bilayer. Residue Asp-355 is part of the active site. At 366 to 403 (TKNGESIMVELAAGPFENAEKLPVVIRVPKLMGYSVMS) the chain is on the lumenal side. Residues 404–424 (VCSVPVSVLGFGDIIVPGLLI) traverse the membrane as a helical segment. The active site involves Asp-416. Residues 425–440 (AYCRRFDVQTGSSIYY) lie on the Cytoplasmic side of the membrane. A helical membrane pass occupies residues 441–461 (ISSTIAYAVGMIITFVVLMVM). Topologically, residues 462–463 (KT) are lumenal. Residues 464–484 (GQPALLYLVPCTLITVSVVAW) form a helical membrane-spanning segment. Positions 466-468 (PAL) match the PAL motif. At 485-523 (SRKEMKKFWKGSSYQVMDHLDYSTNEENPVTTDEQIVQQ) the chain is on the cytoplasmic side. The YXXo lysosomal targeting motif signature appears at 498–501 (YQVM).

The protein belongs to the peptidase A22B family. In terms of assembly, interacts with ITM2B. Glycosylated.

The protein localises to the late endosome membrane. The protein resides in the lysosome membrane. Its subcellular location is the membrane. Its function is as follows. Intramembrane-cleaving aspartic protease (I-CLiP) that cleaves type II membrane signal peptides in the hydrophobic plane of the membrane. Functions in FASLG, ITM2B and TNF processing. Catalyzes the intramembrane cleavage of the anchored fragment of shed TNF-alpha (TNF), which promotes the release of the intracellular domain (ICD) for signaling to the nucleus. Also responsible for the intramembrane cleavage of Fas antigen ligand FASLG, which promotes the release of the intracellular FasL domain (FasL ICD). Essential for degradation of the invariant chain CD74 that plays a central role in the function of antigen-presenting cells in the immune system. Plays a role in the regulation of innate and adaptive immunity. The chain is Signal peptide peptidase-like 2A from Mus musculus (Mouse).